The sequence spans 365 residues: 3-dehydroquinate synthase (365 aa).

NAD(+) is bound by residues 75–80 (DAESGK), 109–113 (GAATD), 133–134 (TT), Lys-146, and Lys-155. Zn(2+) contacts are provided by Glu-188, His-253, and His-269.

This sequence belongs to the sugar phosphate cyclases superfamily. Dehydroquinate synthase family. NAD(+) serves as cofactor. The cofactor is Co(2+). It depends on Zn(2+) as a cofactor.

It is found in the cytoplasm. It carries out the reaction 7-phospho-2-dehydro-3-deoxy-D-arabino-heptonate = 3-dehydroquinate + phosphate. It participates in metabolic intermediate biosynthesis; chorismate biosynthesis; chorismate from D-erythrose 4-phosphate and phosphoenolpyruvate: step 2/7. Its function is as follows. Catalyzes the conversion of 3-deoxy-D-arabino-heptulosonate 7-phosphate (DAHP) to dehydroquinate (DHQ). In Corynebacterium efficiens (strain DSM 44549 / YS-314 / AJ 12310 / JCM 11189 / NBRC 100395), this protein is 3-dehydroquinate synthase.